The sequence spans 569 residues: 4-hydroxy-7-methoxy-3-oxo-3,4-dihydro-2H-1,4-benzoxazin-2-yl glucoside beta-D-glucosidase 1a, chloroplastic (569 aa).

Residues 1–50 constitute a chloroplast transit peptide; the sequence is MALLAAATLNPTTHLSLRSRAGRNSENLWLRSAASSQKSKGRFCNLTIRA. A beta-D-glucoside is bound by residues Q92, H194, and 239-240; that span reads NE. E240 serves as the catalytic Proton donor. Residues C259 and C265 are joined by a disulfide bond. A beta-D-glucoside contacts are provided by residues Y383, E456, W504, 511–512, and F520; that span reads EW. The Nucleophile role is filled by E456.

This sequence belongs to the glycosyl hydrolase 1 family. As to quaternary structure, homo- and heterohexamers. In terms of tissue distribution, expressed in young seedlings early after germination.

The protein localises to the plastid. The protein resides in the chloroplast. The catalysed reaction is Hydrolysis of terminal, non-reducing beta-D-glucosyl residues with release of beta-D-glucose.. It catalyses the reaction DIMBOA beta-D-glucoside + H2O = DIMBOA + D-glucose. It carries out the reaction DIBOA beta-D-glucoside + H2O = DIBOA + D-glucose. Its function is as follows. Acts in defense of young plant parts against pests via the production of hydroxamic acids from hydroxamic acid glucosides. Enzymatic activity is highly correlated with plant growth. The preferred substrate is DIMBOA-beta-D-glucoside. This chain is 4-hydroxy-7-methoxy-3-oxo-3,4-dihydro-2H-1,4-benzoxazin-2-yl glucoside beta-D-glucosidase 1a, chloroplastic (GLU1A), found in Triticum aestivum (Wheat).